The sequence spans 701 residues: C6 finger domain transcription factor nscR (701 aa).

Positions 17-43 form a DNA-binding region, zn(2)-C6 fungal-type; sequence CELCRERKVKCDKLDPCTNCASAGVVC.

It localises to the nucleus. Its function is as follows. Transcription factor that specifically regulates the neosartoricin B biosynthesis gene cluster. The polypeptide is C6 finger domain transcription factor nscR (Arthroderma gypseum (strain ATCC MYA-4604 / CBS 118893) (Microsporum gypseum)).